The chain runs to 125 residues: Subtelomeric hrmA-associated cluster protein cgnA (125 aa).

23 G-Q-I/R/S repeats span residues 11 to 13 (GQI), 14 to 16 (GPI), 17 to 19 (GQR), 20 to 22 (GQS), 23 to 25 (GQR), 26 to 28 (GQS), 29 to 31 (GQR), 32 to 34 (GQS), 35 to 37 (GQI), 38 to 40 (GQS), 41 to 43 (GQS), 44 to 46 (GQS), 47 to 49 (GQS), 50 to 52 (GQS), 53 to 55 (GQI), 56 to 58 (GQI), 59 to 61 (GQI), 62 to 64 (GQI), 65 to 67 (GQI), 68 to 70 (GQI), 71 to 73 (GQI), 74 to 76 (GQI), and 77 to 79 (GQA). Residues 11-79 (GQIGPIGQRG…IGQIGQIGQA (69 aa)) form a 23 X 3 AA approximate tandem repeats of G-Q-I/R/S region. The tract at residues 15 to 57 (PIGQRGQSGQRGQSGQRGQSGQIGQSGQSGQSGQSGQSGQIGQ) is disordered.

It localises to the secreted. In terms of biological role, hypoxia responsive morphology factor that modulates the expression of the subtelomeric hrmA-associated cluster (HAC) containing genes that alter the hyphal surface (such as reduced total chitin or increased beta-glucan exposure) and perturb inter-hyphal interactions within the developing biofilms, resulting in a loss of vertically aligned polarized growing filaments. Consequently, this hypoxia-typic morphotype (called H-MORPH) with altered biofilm architecture leads to increased hypoxia fitness, increased host inflammation, rapid disease progression, and mortality in a murine model of invasive aspergillosis. GcnA is directly involved in the reduction total surface chitin and the increase beta-glucan exposure, and mediates the detachment of the extracellular matrix and especially of its component galactosaminogalactan (GAG). This is Subtelomeric hrmA-associated cluster protein cgnA from Aspergillus fumigatus (strain CBS 144.89 / FGSC A1163 / CEA10) (Neosartorya fumigata).